A 600-amino-acid polypeptide reads, in one-letter code: Aspartate--tRNA(Asp/Asn) ligase (600 aa).

Residue Glu181 coordinates L-aspartate. The interval 205–208 is aspartate; that stretch reads QQYK. An L-aspartate-binding site is contributed by Arg227. ATP is bound by residues 227–229 and Gln236; that span reads RDE. His455 provides a ligand contact to L-aspartate. Glu490 lines the ATP pocket. Arg497 is a binding site for L-aspartate. 542–545 is an ATP binding site; that stretch reads GLDR.

The protein belongs to the class-II aminoacyl-tRNA synthetase family. Type 1 subfamily. As to quaternary structure, homodimer.

It localises to the cytoplasm. It catalyses the reaction tRNA(Asx) + L-aspartate + ATP = L-aspartyl-tRNA(Asx) + AMP + diphosphate. Aspartyl-tRNA synthetase with relaxed tRNA specificity since it is able to aspartylate not only its cognate tRNA(Asp) but also tRNA(Asn). Reaction proceeds in two steps: L-aspartate is first activated by ATP to form Asp-AMP and then transferred to the acceptor end of tRNA(Asp/Asn). This Methylacidiphilum infernorum (isolate V4) (Methylokorus infernorum (strain V4)) protein is Aspartate--tRNA(Asp/Asn) ligase.